Consider the following 302-residue polypeptide: Probable alpha-L-glutamate ligase (302 aa).

In terms of domain architecture, ATP-grasp spans 112 to 294; that stretch reads LQLLLKAGIP…IAAEIIDYIE (183 aa). ATP is bound by residues Lys-148, 185 to 186, Asp-194, and 218 to 220; these read DF and RAN. Asp-255, Glu-267, and Asn-269 together coordinate Mg(2+). Mn(2+) is bound by residues Asp-255, Glu-267, and Asn-269.

The protein belongs to the RimK family. Mg(2+) serves as cofactor. Requires Mn(2+) as cofactor.

In Haemophilus influenzae (strain ATCC 51907 / DSM 11121 / KW20 / Rd), this protein is Probable alpha-L-glutamate ligase.